A 355-amino-acid chain; its full sequence is NADH dehydrogenase-like protein YutJ (355 aa).

This sequence belongs to the NADH dehydrogenase family. FAD is required as a cofactor.

In Bacillus subtilis (strain 168), this protein is NADH dehydrogenase-like protein YutJ (yutJ).